A 626-amino-acid polypeptide reads, in one-letter code: Leucine aminopeptidase 2-1 (626 aa).

Residues 134 to 136 and 259 to 264 contribute to the substrate site; these read QCQ and PYGGME. Residue H288 coordinates Zn(2+). E289 (proton acceptor) is an active-site residue. Zn(2+)-binding residues include H292 and E311. The active-site Proton donor is Y389.

The protein belongs to the peptidase M1 family. Zn(2+) is required as a cofactor.

The protein localises to the cytoplasm. It localises to the nucleus. The enzyme catalyses an epoxide + H2O = an ethanediol. Functionally, aminopeptidase that preferentially cleaves di- and tripeptides. Also has low epoxide hydrolase activity (in vitro). Can hydrolyze the epoxide leukotriene LTA(4) but it forms preferentially 5,6-dihydroxy-7,9,11,14-eicosatetraenoic acid rather than the cytokine leukotriene B(4) as the product compared to the homologous mammalian enzyme (in vitro). The chain is Leucine aminopeptidase 2-1 (LKA4) from Scheffersomyces stipitis (strain ATCC 58785 / CBS 6054 / NBRC 10063 / NRRL Y-11545) (Yeast).